A 234-amino-acid polypeptide reads, in one-letter code: Peptidase E (234 aa).

Residues serine 123, aspartate 138, and histidine 160 each act as charge relay system in the active site.

Belongs to the peptidase S51 family.

The protein resides in the cytoplasm. It catalyses the reaction Dipeptidase E catalyzes the hydrolysis of dipeptides Asp-|-Xaa. It does not act on peptides with N-terminal Glu, Asn or Gln, nor does it cleave isoaspartyl peptides.. In terms of biological role, hydrolyzes dipeptides containing N-terminal aspartate residues. May play a role in allowing the cell to use peptide aspartate to spare carbon otherwise required for the synthesis of the aspartate family of amino acids. The sequence is that of Peptidase E from Actinobacillus pleuropneumoniae serotype 3 (strain JL03).